The sequence spans 282 residues: tRNA U34 carboxymethyltransferase (282 aa).

Residues K54, W68, K73, G92, 114 to 116 (DPS), Y161, and R276 each bind carboxy-S-adenosyl-L-methionine.

Belongs to the class I-like SAM-binding methyltransferase superfamily. CmoB family. In terms of assembly, homotetramer.

It carries out the reaction carboxy-S-adenosyl-L-methionine + 5-hydroxyuridine(34) in tRNA = 5-carboxymethoxyuridine(34) in tRNA + S-adenosyl-L-homocysteine + H(+). In terms of biological role, catalyzes carboxymethyl transfer from carboxy-S-adenosyl-L-methionine (Cx-SAM) to 5-hydroxyuridine (ho5U) to form 5-carboxymethoxyuridine (cmo5U) at position 34 in tRNAs. The protein is tRNA U34 carboxymethyltransferase of Campylobacter fetus subsp. fetus (strain 82-40).